The chain runs to 2593 residues: Citrinin polyketide synthase (2593 aa).

The interval 70–224 (KLLENLNAWI…YVSVIVDQRR (155 aa)) is N-terminal acylcarrier protein transacylase domain (SAT). Residue Cys-139 is the Nucleophile; for transacylase activity of the active site. The active-site Proton donor/acceptor; for transacylase activity is His-258. Residues 391–806 (DERIAVIGMA…GSNASMVVTQ (416 aa)) form the Ketosynthase family 3 (KS3) domain. Active-site for beta-ketoacyl synthase activity residues include Cys-555, His-690, and His-729. A malonyl-CoA:ACP transacylase (MAT) domain region spans residues 906–1191 (PDPKPVILCF…VAIWLEAGSN (286 aa)). The segment at 1291-1424 (PKGLTTFVGY…GTITFQAADS (134 aa)) is N-terminal hotdog fold. The region spanning 1291 to 1603 (PKGLTTFVGY…YQKVSISGIR (313 aa)) is the PKS/mFAS DH domain. The segment at 1322 to 1601 (LLSGHIMANA…ISYQKVSISG (280 aa)) is product template (PT) domain. The active-site Proton acceptor; for dehydratase activity is His-1326. Positions 1451–1603 (VADDILQGRN…YQKVSISGIR (153 aa)) are C-terminal hotdog fold. Asp-1508 serves as the catalytic Proton donor; for dehydratase activity. Residues 1636-1662 (VADSPLVDGSSTAVSGTPPTKKAPKAP) form a disordered region. In terms of domain architecture, Carrier spans 1661-1738 (APSVDITGKM…SLVECMQRIL (78 aa)). At Ser-1689 the chain carries O-(pantetheine 4'-phosphoryl)serine. Active-site for methyltransferase activity residues include Tyr-1955, His-2067, and Glu-2093. The tract at residues 1960-2134 (INAVWIQQAE…ATHWKKILTS (175 aa)) is methyltransferase (CMeT) domain. Residues 2215–2459 (PAPTGHCVLV…KALPDFDGSL (245 aa)) form an NADPH-binding (R) domain region.

It depends on pantetheine 4'-phosphate as a cofactor.

It participates in mycotoxin biosynthesis. Functionally, non-reducing polyketide synthase; part of the gene cluster that mediates the biosynthesis of the mycotoxin citrinin, a hepato-nephrotoxic compound to humans due to inhibition of respiration complex III. The pathway begins with the synthesis of a keto-aldehyde intermediate by the citrinin PKS (pksCT) from successive condensations of 4 malonyl-CoA units, presumably with a simple acetyl-CoA starter unit. Release of the keto-aldehyde intermediate is consistent with the presence of the C-terminal reductive release domain. Mp11 collaborates with pksCT by catalyzing the hydrolysis of ACP-bound acyl intermediates to free the ACP from stalled intermediates. Mpl2 then catalyzes the oxidation of the C-12 methyl of the ketone intermediate to an alcohol intermediate which is further oxidized by the oxidoreductase mpl7 to produce a bisaldehyde intermediate. The fourth catalytic step is catalyzed by the mpl4 aldehyde dehydrogenase. The final transformation is the reduction of C-3 by mpl6 to provide the chemically stable citrinin nucleus. The chain is Citrinin polyketide synthase from Monascus purpureus (Red mold).